Here is a 208-residue protein sequence, read N- to C-terminus: Ribosomal RNA large subunit methyltransferase E (208 aa).

Gly-62, Trp-64, Asp-82, Asp-98, and Asp-123 together coordinate S-adenosyl-L-methionine. Catalysis depends on Lys-163, which acts as the Proton acceptor.

It belongs to the class I-like SAM-binding methyltransferase superfamily. RNA methyltransferase RlmE family.

It localises to the cytoplasm. It catalyses the reaction uridine(2552) in 23S rRNA + S-adenosyl-L-methionine = 2'-O-methyluridine(2552) in 23S rRNA + S-adenosyl-L-homocysteine + H(+). Its function is as follows. Specifically methylates the uridine in position 2552 of 23S rRNA at the 2'-O position of the ribose in the fully assembled 50S ribosomal subunit. This is Ribosomal RNA large subunit methyltransferase E from Actinobacillus succinogenes (strain ATCC 55618 / DSM 22257 / CCUG 43843 / 130Z).